A 367-amino-acid chain; its full sequence is Pentatricopeptide repeat-containing protein At1g11900 (367 aa).

PPR repeat units lie at residues 69–103, 104–139, 141–175, 176–210, 211–241, 247–281, 282–316, and 317–347; these read SKID…NICL, PISV…GKEP, SSDC…SLPY, RLIV…ECKP, DVIT…MKED, NIIT…GIEP, DLLS…QIRP, and SVYV…LKNT.

It belongs to the PPR family. P subfamily.

This chain is Pentatricopeptide repeat-containing protein At1g11900, found in Arabidopsis thaliana (Mouse-ear cress).